The chain runs to 240 residues: tRNA (guanine-N(7)-)-methyltransferase (240 aa).

Residues 1 to 10 are compositionally biased toward polar residues; it reads MTESQDTPIT. Residues 1–20 are disordered; sequence MTESQDTPITTDGEARPHRR. 4 residues coordinate S-adenosyl-L-methionine: Glu-70, Glu-95, Asp-122, and Asp-145. The active site involves Asp-145. Residues Lys-149, Asp-181, and 218–221 each bind substrate; that span reads TKFE.

Belongs to the class I-like SAM-binding methyltransferase superfamily. TrmB family.

The catalysed reaction is guanosine(46) in tRNA + S-adenosyl-L-methionine = N(7)-methylguanosine(46) in tRNA + S-adenosyl-L-homocysteine. It participates in tRNA modification; N(7)-methylguanine-tRNA biosynthesis. In terms of biological role, catalyzes the formation of N(7)-methylguanine at position 46 (m7G46) in tRNA. The sequence is that of tRNA (guanine-N(7)-)-methyltransferase from Pseudomonas putida (strain W619).